Here is a 382-residue protein sequence, read N- to C-terminus: Homoserine O-acetyltransferase (382 aa).

One can recognise an AB hydrolase-1 domain in the interval 52-356; that stretch reads NVVMVLHALT…TYGHDGFLVE (305 aa). Ser-157 functions as the Nucleophile in the catalytic mechanism. Residue Arg-227 participates in substrate binding. Active-site residues include Asp-320 and His-350. Asp-351 contacts substrate.

It belongs to the AB hydrolase superfamily. MetX family. Homodimer.

It is found in the cytoplasm. The catalysed reaction is L-homoserine + acetyl-CoA = O-acetyl-L-homoserine + CoA. The protein operates within amino-acid biosynthesis; L-methionine biosynthesis via de novo pathway; O-acetyl-L-homoserine from L-homoserine: step 1/1. Its function is as follows. Transfers an acetyl group from acetyl-CoA to L-homoserine, forming acetyl-L-homoserine. This is Homoserine O-acetyltransferase from Mycobacterium leprae (strain TN).